Consider the following 414-residue polypeptide: Ribulose bisphosphate carboxylase large chain (414 aa).

Residues N100 and T150 each contribute to the substrate site. K152 functions as the Proton acceptor in the catalytic mechanism. Residue K154 coordinates substrate. The Mg(2+) site is built by K178, D180, and E181. K178 is subject to N6-carboxylysine. The active-site Proton acceptor is the H271. 3 residues coordinate substrate: R272, H304, and S356.

Belongs to the RuBisCO large chain family. Type I subfamily. In terms of assembly, heterohexadecamer of 8 large chains and 8 small chains; disulfide-linked. The disulfide link is formed within the large subunit homodimers. Mg(2+) is required as a cofactor. Post-translationally, the disulfide bond which can form in the large chain dimeric partners within the hexadecamer appears to be associated with oxidative stress and protein turnover.

It is found in the plastid. The protein resides in the chloroplast. The catalysed reaction is 2 (2R)-3-phosphoglycerate + 2 H(+) = D-ribulose 1,5-bisphosphate + CO2 + H2O. It catalyses the reaction D-ribulose 1,5-bisphosphate + O2 = 2-phosphoglycolate + (2R)-3-phosphoglycerate + 2 H(+). RuBisCO catalyzes two reactions: the carboxylation of D-ribulose 1,5-bisphosphate, the primary event in carbon dioxide fixation, as well as the oxidative fragmentation of the pentose substrate in the photorespiration process. Both reactions occur simultaneously and in competition at the same active site. The protein is Ribulose bisphosphate carboxylase large chain (rbcL) of Blechnopsis orientalis (Fish fern).